Reading from the N-terminus, the 674-residue chain is Sodium/myo-inositol cotransporter 2 (674 aa).

The Extracellular segment spans residues 1–27 (MESSPSSPQPTQSDPLAVFPQRTLEPA). A helical transmembrane segment spans residues 28–48 (DIAVLVLYFLFVLAVGLWSTV). The Cytoplasmic segment spans residues 49 to 56 (KTRRDTVK). Residues 57-77 (GYFLAGGDMVWWPVGASLFAS) traverse the membrane as a helical segment. The Extracellular segment spans residues 78–102 (NVGSGHFVGLAGSGAAAGLSVTAYE). A helical transmembrane segment spans residues 103-123 (FNGIFSVLMLAWIFLPIYIAG). The Cytoplasmic segment spans residues 124–140 (QVTTMPEYLRKRFGGSR). Residues 141-161 (IPITLAVLYLFIYIFTKISVD) form a helical membrane-spanning segment. Topologically, residues 162–180 (MYAGAIFIQQSLHLNLYLA) are extracellular. The helical transmembrane segment at 181–201 (IVGLLAITALYTIAGGLAAVI) threads the bilayer. The Cytoplasmic portion of the chain corresponds to 202–208 (YTDALQT). Residues 209–229 (LIMLIGALTLMGYSFAAVGGM) form a helical membrane-spanning segment. Over 230 to 272 (EGLKEKYFLALASNRSGNSSCGLPREDAFHIFRDPLTSDLPWP) the chain is Extracellular. A helical membrane pass occupies residues 273-293 (GILFGMSIPSLWYWCTDQVIV). Over 294–308 (QRTLAAKNLSHAKGG) the chain is Cytoplasmic. The chain crosses the membrane as a helical span at residues 309–329 (SLMAAYLKVLPLFIMVFPGMV). Topologically, residues 330–374 (SRVLFPDQVACADPEICQKVCSNPAGCSDIAYPKLVLELLPMGLR) are extracellular. The chain crosses the membrane as a helical span at residues 375-397 (GLMMAVMVAALMSSLTSIFNSAS). At 398–418 (TIFTMDLWNHLRPRASERELM) the chain is on the cytoplasmic side. The chain crosses the membrane as a helical span at residues 419 to 439 (IVGRVFVLLLVLVSILWIPVV). Over 440–446 (QASQGGQ) the chain is Extracellular. A helical membrane pass occupies residues 447-467 (LFIYIQSISSYLQPPVAVVFI). The Cytoplasmic portion of the chain corresponds to 468-479 (MGCFWKRTNEKG). A helical membrane pass occupies residues 480 to 500 (AFSGLILGLLLGLVRLVLDFI). The Extracellular segment spans residues 501–518 (YPQPRCDQPDERPAVVRD). Residues 519–539 (VHYLYFSMILSSVTLVTVSTV) form a helical membrane-spanning segment. The Cytoplasmic segment spans residues 540–653 (SWCTAPPTQE…SLEEIPLVKT (114 aa)). The helical transmembrane segment at 654–674 (LLDINLIVCISCAIFLWGYFA) threads the bilayer.

The protein belongs to the sodium:solute symporter (SSF) (TC 2.A.21) family.

The protein localises to the membrane. It is found in the apical cell membrane. It carries out the reaction myo-inositol(out) + 2 Na(+)(out) = myo-inositol(in) + 2 Na(+)(in). The enzyme catalyses 1D-chiro-inositol(out) + 2 Na(+)(out) = 1D-chiro-inositol(in) + 2 Na(+)(in). The catalysed reaction is D-glucose(out) + 2 Na(+)(out) = D-glucose(in) + 2 Na(+)(in). It catalyses the reaction D-xylose(out) + 2 Na(+)(out) = D-xylose(in) + 2 Na(+)(in). With respect to regulation, MI transport activity inhibited by D-chiro-inositol (DCI), phlorizin (Pz) and sodium (Na(+)). Insulin increases D-chiro-inositol uptake. Involved in the sodium-dependent cotransport of myo-inositol (MI) with a Na(+):MI stoichiometry of 2:1. Exclusively responsible for apical MI transport and absorption in intestine. Can also transport D-chiro-inositol (DCI) but not L-fucose. Exhibits stereospecific cotransport of both D-glucose and D-xylose. May induce apoptosis through the TNF-alpha, PDCD1 pathway. May play a role in the regulation of MI concentration in serum, involving reabsorption in at least the proximal tubule of the kidney. This Sus scrofa (Pig) protein is Sodium/myo-inositol cotransporter 2.